Reading from the N-terminus, the 371-residue chain is Bifunctional enzyme IspD/IspF (371 aa).

Residues M1 to F212 are 2-C-methyl-D-erythritol 4-phosphate cytidylyltransferase. The segment at F212–K371 is 2-C-methyl-D-erythritol 2,4-cyclodiphosphate synthase. The a divalent metal cation site is built by D218 and H220. 4-CDP-2-C-methyl-D-erythritol 2-phosphate is bound by residues D218 to H220 and H244 to S245. H252 serves as a coordination point for a divalent metal cation. 4-CDP-2-C-methyl-D-erythritol 2-phosphate contacts are provided by residues D266–G268, F271–D275, T342–E345, F349, and R352.

The protein in the N-terminal section; belongs to the IspD/TarI cytidylyltransferase family. IspD subfamily. It in the C-terminal section; belongs to the IspF family. A divalent metal cation is required as a cofactor.

The catalysed reaction is 2-C-methyl-D-erythritol 4-phosphate + CTP + H(+) = 4-CDP-2-C-methyl-D-erythritol + diphosphate. It carries out the reaction 4-CDP-2-C-methyl-D-erythritol 2-phosphate = 2-C-methyl-D-erythritol 2,4-cyclic diphosphate + CMP. Its pathway is isoprenoid biosynthesis; isopentenyl diphosphate biosynthesis via DXP pathway; isopentenyl diphosphate from 1-deoxy-D-xylulose 5-phosphate: step 2/6. It participates in isoprenoid biosynthesis; isopentenyl diphosphate biosynthesis via DXP pathway; isopentenyl diphosphate from 1-deoxy-D-xylulose 5-phosphate: step 4/6. In terms of biological role, bifunctional enzyme that catalyzes the formation of 4-diphosphocytidyl-2-C-methyl-D-erythritol from CTP and 2-C-methyl-D-erythritol 4-phosphate (MEP) (IspD), and catalyzes the conversion of 4-diphosphocytidyl-2-C-methyl-D-erythritol 2-phosphate (CDP-ME2P) to 2-C-methyl-D-erythritol 2,4-cyclodiphosphate (ME-CPP) with a corresponding release of cytidine 5-monophosphate (CMP) (IspF). This Campylobacter curvus (strain 525.92) protein is Bifunctional enzyme IspD/IspF.